We begin with the raw amino-acid sequence, 183 residues long: ATP synthase subunit b, chloroplastic (183 aa).

A helical transmembrane segment spans residues 27 to 49 (LATNLINLTVVVGVLIFFGKGVL).

Belongs to the ATPase B chain family. F-type ATPases have 2 components, F(1) - the catalytic core - and F(0) - the membrane proton channel. F(1) has five subunits: alpha(3), beta(3), gamma(1), delta(1), epsilon(1). F(0) has four main subunits: a(1), b(1), b'(1) and c(10-14). The alpha and beta chains form an alternating ring which encloses part of the gamma chain. F(1) is attached to F(0) by a central stalk formed by the gamma and epsilon chains, while a peripheral stalk is formed by the delta, b and b' chains.

The protein resides in the plastid. It is found in the chloroplast thylakoid membrane. Its function is as follows. F(1)F(0) ATP synthase produces ATP from ADP in the presence of a proton or sodium gradient. F-type ATPases consist of two structural domains, F(1) containing the extramembraneous catalytic core and F(0) containing the membrane proton channel, linked together by a central stalk and a peripheral stalk. During catalysis, ATP synthesis in the catalytic domain of F(1) is coupled via a rotary mechanism of the central stalk subunits to proton translocation. In terms of biological role, component of the F(0) channel, it forms part of the peripheral stalk, linking F(1) to F(0). This is ATP synthase subunit b, chloroplastic from Brachypodium distachyon (Purple false brome).